We begin with the raw amino-acid sequence, 228 residues long: MTIITPITNDPTTALLRLMAWLSPVFPVGSFSYSHGLERAVHDGLVVDAAGLQDWLQWLVRRGSGWNDAVLCAESWRCAMKGEDLHEIAELAEALAGSRERHMETMLQGGAFFAAARSWPCEIFDRLPPDCAYPVAVGAVAGGHGVPLAQALAAFLQAFCINLLQASIRLSVTGQSGVTAIMAALEPVLGETAARAALSSMEDLGSATFIADIMAMKHETQHSRLFRS.

The protein belongs to the UreF family. As to quaternary structure, ureD, UreF and UreG form a complex that acts as a GTP-hydrolysis-dependent molecular chaperone, activating the urease apoprotein by helping to assemble the nickel containing metallocenter of UreC. The UreE protein probably delivers the nickel.

The protein resides in the cytoplasm. Its function is as follows. Required for maturation of urease via the functional incorporation of the urease nickel metallocenter. In terms of biological role, disruption of the ure1 gene cluster suggests that it protects brucellae during their passage through the stomach. The major route of infection in human brucellosis is oral. This chain is Urease accessory protein UreF 1, found in Brucella abortus (strain 2308).